Reading from the N-terminus, the 232-residue chain is Large ribosomal subunit protein uL1 (232 aa).

This sequence belongs to the universal ribosomal protein uL1 family. In terms of assembly, part of the 50S ribosomal subunit.

Its function is as follows. Binds directly to 23S rRNA. The L1 stalk is quite mobile in the ribosome, and is involved in E site tRNA release. Functionally, protein L1 is also a translational repressor protein, it controls the translation of the L11 operon by binding to its mRNA. This chain is Large ribosomal subunit protein uL1, found in Sinorhizobium fredii (strain NBRC 101917 / NGR234).